Here is a 93-residue protein sequence, read N- to C-terminus: Putative regulatory protein LBL_1834 (93 aa).

It belongs to the RemA family.

In Leptospira borgpetersenii serovar Hardjo-bovis (strain L550), this protein is Putative regulatory protein LBL_1834.